The sequence spans 303 residues: MSTTDSGFVLYHYTPSKAAAIVFVVLFIIMTVIFAVQTLYAARKSSKALKNNPFESSDDKVDSLEDAEYKQLKITPTVFAFIPFFTGCIMEAVGYIGRALSSSNPERTTPYIIQSVLLLVAPALIAATIYMIFGRLLHVMRCQSLILISARFGTTFFVVGDVFSFFLQAAGGGLMSKAGSTKTGSGLITAGLFVQVIFFGFFIINEIRFTVNVKRRCLFYEDISRKWIFVNATLLLSSMLILLRSIVRIVEFIQGFNGYIISHEYFIYVFDAVPMLLVIIAFSVGSFFGNVFDVIKECQTLSN.

Over 1–18 the chain is Extracellular; the sequence is MSTTDSGFVLYHYTPSKA. Residues 19 to 39 form a helical membrane-spanning segment; it reads AAIVFVVLFIIMTVIFAVQTL. Residues 40-76 lie on the Cytoplasmic side of the membrane; that stretch reads YAARKSSKALKNNPFESSDDKVDSLEDAEYKQLKITP. Residues 77 to 97 traverse the membrane as a helical segment; it reads TVFAFIPFFTGCIMEAVGYIG. Residues 98–111 are Extracellular-facing; it reads RALSSSNPERTTPY. A helical membrane pass occupies residues 112–132; it reads IIQSVLLLVAPALIAATIYMI. The Cytoplasmic segment spans residues 133-154; it reads FGRLLHVMRCQSLILISARFGT. Residues 155 to 175 form a helical membrane-spanning segment; that stretch reads TFFVVGDVFSFFLQAAGGGLM. The Extracellular segment spans residues 176–183; it reads SKAGSTKT. The helical transmembrane segment at 184–204 threads the bilayer; it reads GSGLITAGLFVQVIFFGFFII. Topologically, residues 205–226 are cytoplasmic; sequence NEIRFTVNVKRRCLFYEDISRK. Residues 227-247 traverse the membrane as a helical segment; sequence WIFVNATLLLSSMLILLRSIV. Over 248 to 264 the chain is Extracellular; sequence RIVEFIQGFNGYIISHE. A helical transmembrane segment spans residues 265–285; the sequence is YFIYVFDAVPMLLVIIAFSVG. Residues 286–303 are Cytoplasmic-facing; it reads SFFGNVFDVIKECQTLSN.

It belongs to the lipid-translocating exporter (LTE) (TC 9.A.26.1) family. N-glycosylated.

It localises to the cell membrane. In terms of biological role, involved in inducible protoporphyrin IX influx and heme efflux. This is Protoporphyrin uptake protein 1 (PUG1) from Saccharomyces cerevisiae (strain ATCC 204508 / S288c) (Baker's yeast).